Here is a 134-residue protein sequence, read N- to C-terminus: uncharacterized protein (134 aa).

The next 3 membrane-spanning stretches (helical) occupy residues 21–41, 52–72, and 95–115; these read FSTT…LYLI, LVLL…TPYE, and IVMA…VYII.

The protein resides in the host membrane. This is an uncharacterized protein from Acidianus two-tailed virus (ATV).